Consider the following 384-residue polypeptide: Stress response protein bis1 (384 aa).

Disordered stretches follow at residues 1–22 (MSLAKKIDDDEKQLVKPVNKEQ) and 344–384 (SPLH…PKRV).

The protein belongs to the ESS2 family. Heterodimer with ish1.

It is found in the nucleus. It localises to the cytoplasm. The protein localises to the cytoskeleton. The protein resides in the spindle. Its function is as follows. Has a role in maintaining cell viability during stationary phase induced by stress response. May be involved in pre-mRNA splicing. This Schizosaccharomyces pombe (strain 972 / ATCC 24843) (Fission yeast) protein is Stress response protein bis1 (bis1).